Consider the following 127-residue polypeptide: Fluoride-specific ion channel FluC (127 aa).

3 consecutive transmembrane segments (helical) span residues 28-48 (LALF…SLAM), 73-93 (TGVL…ALLI), and 98-118 (VGLA…GLFL). Na(+) is bound by residues G77 and T80.

The protein belongs to the fluoride channel Fluc/FEX (TC 1.A.43) family.

It localises to the cell inner membrane. It catalyses the reaction fluoride(in) = fluoride(out). Its activity is regulated as follows. Na(+) is not transported, but it plays an essential structural role and its presence is essential for fluoride channel function. Functionally, fluoride-specific ion channel. Important for reducing fluoride concentration in the cell, thus reducing its toxicity. This Beijerinckia indica subsp. indica (strain ATCC 9039 / DSM 1715 / NCIMB 8712) protein is Fluoride-specific ion channel FluC.